The primary structure comprises 458 residues: MKEFDTIAAIATALGEGGIAIIRVSGNKALEIVNKIFRGINGKDLLDIKPYTMRYGHMIDENNEIIDEVIVSFMKGPRSFTAEDTVEINCHGGIVATNKVLQNVIKAGARLAEPGEFTKRAFLNGRIDLSQAEAVMDIITAKTELSMKSAMTQSQGRLSTEINNLRKEALDILALIEYAVDFTEDDEEPDETIPVKVKEDVITLRGKVNNLIDTADEGKLIRDGLSMVIVGKPNVGKSSLLNALLNEKRAIVTDIAGTTRDVIEEYINLDGIPVRLVDTAGIRETEDVVEKIGVEKSKEKINEADLVILMLDTSRELDEEDKEIIDYIKDRKYIVLLNKVDLDRKLSSEIVDNLENKIELSAKTGFGIDDLKSKIKDLFFNGSIDAESVMVTNTRHKEALYRASENLDGALNGLNNNEFLDLVSIYVTSALRALGEITGAELEEDLVNKIFAEFCCGK.

Positions 23, 87, and 126 each coordinate (6S)-5-formyl-5,6,7,8-tetrahydrofolate. Positions 224-380 constitute a TrmE-type G domain; sequence GLSMVIVGKP…LKSKIKDLFF (157 aa). A K(+)-binding site is contributed by N234. GTP-binding positions include 234–239, 253–259, and 278–281; these read NVGKSS, TDIAGTT, and DTAG. S238 lines the Mg(2+) pocket. Residues T253, I255, and T258 each contribute to the K(+) site. Mg(2+) is bound at residue T259. Residue K458 coordinates (6S)-5-formyl-5,6,7,8-tetrahydrofolate.

Belongs to the TRAFAC class TrmE-Era-EngA-EngB-Septin-like GTPase superfamily. TrmE GTPase family. In terms of assembly, homodimer. Heterotetramer of two MnmE and two MnmG subunits. Requires K(+) as cofactor.

Its subcellular location is the cytoplasm. Exhibits a very high intrinsic GTPase hydrolysis rate. Involved in the addition of a carboxymethylaminomethyl (cmnm) group at the wobble position (U34) of certain tRNAs, forming tRNA-cmnm(5)s(2)U34. This chain is tRNA modification GTPase MnmE, found in Clostridium perfringens (strain ATCC 13124 / DSM 756 / JCM 1290 / NCIMB 6125 / NCTC 8237 / Type A).